Consider the following 251-residue polypeptide: Cell division protein ZapD (251 aa).

It belongs to the ZapD family. As to quaternary structure, interacts with FtsZ.

It localises to the cytoplasm. In terms of biological role, cell division factor that enhances FtsZ-ring assembly. Directly interacts with FtsZ and promotes bundling of FtsZ protofilaments, with a reduction in FtsZ GTPase activity. The chain is Cell division protein ZapD from Paraburkholderia phymatum (strain DSM 17167 / CIP 108236 / LMG 21445 / STM815) (Burkholderia phymatum).